A 710-amino-acid chain; its full sequence is Polyribonucleotide nucleotidyltransferase (710 aa).

Residues aspartate 487 and aspartate 493 each contribute to the Mg(2+) site. The KH domain occupies 554–613 (PRIEVMNIPVDKIREVIGSGGKVIREIVEKTGAKINIEDDGTVKIASSSGKEIEAARKWI). Residues 623–691 (GQIYEGTVVK…ERGKVRLSMK (69 aa)) enclose the S1 motif domain.

It belongs to the polyribonucleotide nucleotidyltransferase family. Mg(2+) serves as cofactor.

It is found in the cytoplasm. The enzyme catalyses RNA(n+1) + phosphate = RNA(n) + a ribonucleoside 5'-diphosphate. Functionally, involved in mRNA degradation. Catalyzes the phosphorolysis of single-stranded polyribonucleotides processively in the 3'- to 5'-direction. The polypeptide is Polyribonucleotide nucleotidyltransferase (Rhizobium rhizogenes (strain K84 / ATCC BAA-868) (Agrobacterium radiobacter)).